The primary structure comprises 505 residues: Maturase K (505 aa).

Belongs to the intron maturase 2 family. MatK subfamily.

Its subcellular location is the plastid. The protein resides in the chloroplast. Functionally, usually encoded in the trnK tRNA gene intron. Probably assists in splicing its own and other chloroplast group II introns. The chain is Maturase K from Barclaya longifolia (Orchid lily).